We begin with the raw amino-acid sequence, 766 residues long: Oligopeptide transporter 7 (766 aa).

The tract at residues 1–58 is disordered; the sequence is MEESEQVLPLLTNPKDLTNPSYASSSSSSSEPRDETEDLLLPISDENEEEEEENSPIR. Over residues 45–54 the composition is skewed to acidic residues; it reads DENEEEEEEN. Transmembrane regions (helical) follow at residues 79–99, 104–124, 154–174, 184–204, 247–267, 287–307, 324–344, 390–410, 446–466, 477–497, 509–529, 561–581, 627–647, 676–696, and 709–729; these read MWVL…FFWY, LTIS…LMAA, ITIF…VTVV, FFVS…WAGI, FVIA…LFQI, IGSG…STIS, VGVG…WLDV, LCTF…ATIM, VPEW…IFAC, WWGV…IGII, IITE…NMCF, FMAQ…TAWW, LYKS…LVWL, ATAV…FVVF, and VLSG…YMCL.

The protein belongs to the oligopeptide OPT transporter (TC 2.A.67.1) family. Expressed in the major and the first-order veins and in the hydathodes of the leaves. In the roots, expressed in circular zones surrounding lateral root primordia and in some part of the root epidermis. Expressed also in the sepals and the cortical tissues of the stem, but not in the conducting bundles, the petals or the reproductive tissues.

It localises to the membrane. Functionally, involved in the translocation of tetra- and pentapeptides across the cellular membrane in an energy-dependent manner. May also transport cadmium complexes. The protein is Oligopeptide transporter 7 (OPT7) of Arabidopsis thaliana (Mouse-ear cress).